Here is a 175-residue protein sequence, read N- to C-terminus: uncharacterized protein (175 aa).

Polar residues predominate over residues methionine 1–aspartate 14. Disordered regions lie at residues methionine 1–serine 31 and alanine 127–arginine 175. A compositionally biased stretch (basic and acidic residues) spans histidine 16–alanine 27. Low complexity predominate over residues arginine 130 to leucine 149. Residues glycine 154–arginine 175 show a composition bias toward polar residues.

It localises to the cytoplasm. The protein localises to the nucleus. This is an uncharacterized protein from Schizosaccharomyces pombe (strain 972 / ATCC 24843) (Fission yeast).